We begin with the raw amino-acid sequence, 331 residues long: Holliday junction branch migration complex subunit RuvB (331 aa).

The segment at 1–182 is large ATPase domain (RuvB-L); that stretch reads MSNDTLHKYE…FGIPLHLEFY (182 aa). ATP is bound by residues Leu21, Arg22, Gly63, Lys66, Thr67, Thr68, 129 to 131, Arg172, Tyr182, and Arg219; that span reads EDY. Thr67 provides a ligand contact to Mg(2+). The interval 183 to 254 is small ATPAse domain (RuvB-S); the sequence is SVDELVLVIK…FANSALFRLG (72 aa). Positions 257–331 are head domain (RuvB-H); the sequence is GAGFDKMDLK…FEYLLSSKYI (75 aa). DNA is bound by residues Arg310 and Arg315.

It belongs to the RuvB family. Homohexamer. Forms an RuvA(8)-RuvB(12)-Holliday junction (HJ) complex. HJ DNA is sandwiched between 2 RuvA tetramers; dsDNA enters through RuvA and exits via RuvB. An RuvB hexamer assembles on each DNA strand where it exits the tetramer. Each RuvB hexamer is contacted by two RuvA subunits (via domain III) on 2 adjacent RuvB subunits; this complex drives branch migration. In the full resolvosome a probable DNA-RuvA(4)-RuvB(12)-RuvC(2) complex forms which resolves the HJ.

It is found in the cytoplasm. The enzyme catalyses ATP + H2O = ADP + phosphate + H(+). Functionally, the RuvA-RuvB-RuvC complex processes Holliday junction (HJ) DNA during genetic recombination and DNA repair, while the RuvA-RuvB complex plays an important role in the rescue of blocked DNA replication forks via replication fork reversal (RFR). RuvA specifically binds to HJ cruciform DNA, conferring on it an open structure. The RuvB hexamer acts as an ATP-dependent pump, pulling dsDNA into and through the RuvAB complex. RuvB forms 2 homohexamers on either side of HJ DNA bound by 1 or 2 RuvA tetramers; 4 subunits per hexamer contact DNA at a time. Coordinated motions by a converter formed by DNA-disengaged RuvB subunits stimulates ATP hydrolysis and nucleotide exchange. Immobilization of the converter enables RuvB to convert the ATP-contained energy into a lever motion, pulling 2 nucleotides of DNA out of the RuvA tetramer per ATP hydrolyzed, thus driving DNA branch migration. The RuvB motors rotate together with the DNA substrate, which together with the progressing nucleotide cycle form the mechanistic basis for DNA recombination by continuous HJ branch migration. Branch migration allows RuvC to scan DNA until it finds its consensus sequence, where it cleaves and resolves cruciform DNA. In Anaplasma marginale (strain Florida), this protein is Holliday junction branch migration complex subunit RuvB.